A 454-amino-acid chain; its full sequence is Bifunctional protein GlmU (454 aa).

Positions 1–233 are pyrophosphorylase; the sequence is MQATPRPLAL…EAETIGINSR (233 aa). UDP-N-acetyl-alpha-D-glucosamine-binding positions include 13–16, Lys-27, Gln-80, 85–86, 108–110, Gly-145, Glu-159, Asn-174, and Asn-231; these read LAAG, GT, and YGD. Asp-110 contacts Mg(2+). Residue Asn-231 coordinates Mg(2+). The tract at residues 234–254 is linker; it reads AELVRAEAQFQSQRRAALIEA. Residues 255-454 form an N-acetyltransferase region; that stretch reads GVTMQAPDSV…KAIKDAKSKD (200 aa). 2 residues coordinate UDP-N-acetyl-alpha-D-glucosamine: Arg-320 and Lys-338. His-350 serves as the catalytic Proton acceptor. UDP-N-acetyl-alpha-D-glucosamine is bound by residues Tyr-353 and Asn-364. Residues Ala-367, 373-374, Ser-392, Ser-410, and Arg-427 contribute to the acetyl-CoA site; that span reads NY.

It in the N-terminal section; belongs to the N-acetylglucosamine-1-phosphate uridyltransferase family. The protein in the C-terminal section; belongs to the transferase hexapeptide repeat family. Homotrimer. Mg(2+) serves as cofactor.

The protein resides in the cytoplasm. The catalysed reaction is alpha-D-glucosamine 1-phosphate + acetyl-CoA = N-acetyl-alpha-D-glucosamine 1-phosphate + CoA + H(+). It carries out the reaction N-acetyl-alpha-D-glucosamine 1-phosphate + UTP + H(+) = UDP-N-acetyl-alpha-D-glucosamine + diphosphate. The protein operates within nucleotide-sugar biosynthesis; UDP-N-acetyl-alpha-D-glucosamine biosynthesis; N-acetyl-alpha-D-glucosamine 1-phosphate from alpha-D-glucosamine 6-phosphate (route II): step 2/2. It participates in nucleotide-sugar biosynthesis; UDP-N-acetyl-alpha-D-glucosamine biosynthesis; UDP-N-acetyl-alpha-D-glucosamine from N-acetyl-alpha-D-glucosamine 1-phosphate: step 1/1. Its pathway is bacterial outer membrane biogenesis; LPS lipid A biosynthesis. Functionally, catalyzes the last two sequential reactions in the de novo biosynthetic pathway for UDP-N-acetylglucosamine (UDP-GlcNAc). The C-terminal domain catalyzes the transfer of acetyl group from acetyl coenzyme A to glucosamine-1-phosphate (GlcN-1-P) to produce N-acetylglucosamine-1-phosphate (GlcNAc-1-P), which is converted into UDP-GlcNAc by the transfer of uridine 5-monophosphate (from uridine 5-triphosphate), a reaction catalyzed by the N-terminal domain. The protein is Bifunctional protein GlmU of Jannaschia sp. (strain CCS1).